The following is a 325-amino-acid chain: Beta-ketoacyl-[acyl-carrier-protein] synthase III (325 aa).

Catalysis depends on residues Cys112 and His250. An ACP-binding region spans residues 251 to 255; it reads QANSR. Asn280 is a catalytic residue.

Belongs to the thiolase-like superfamily. FabH family. As to quaternary structure, homodimer.

It localises to the cytoplasm. It catalyses the reaction malonyl-[ACP] + acetyl-CoA + H(+) = 3-oxobutanoyl-[ACP] + CO2 + CoA. Its pathway is lipid metabolism; fatty acid biosynthesis. Catalyzes the condensation reaction of fatty acid synthesis by the addition to an acyl acceptor of two carbons from malonyl-ACP. Catalyzes the first condensation reaction which initiates fatty acid synthesis and may therefore play a role in governing the total rate of fatty acid production. Possesses both acetoacetyl-ACP synthase and acetyl transacylase activities. Its substrate specificity determines the biosynthesis of branched-chain and/or straight-chain of fatty acids. The sequence is that of Beta-ketoacyl-[acyl-carrier-protein] synthase III from Lactococcus lactis subsp. cremoris (strain MG1363).